The following is a 475-amino-acid chain: Early growth response protein 1-B (475 aa).

Disordered stretches follow at residues 109 to 180 (NVSS…TASI) and 264 to 285 (PSRMRKYPNRPSKTPPHERPYA). A compositionally biased stretch (low complexity) spans 111 to 140 (SSSSAPSSSPSSSSSSSSSSSSQSPPLSCS). A compositionally biased stretch (polar residues) spans 170-179 (QPFQNASTAS). C2H2-type zinc fingers lie at residues 284–308 (YACPVESCDRRFSRSDELTRHIRIH), 314–336 (FQCRICMRNFSRSDHLTTHIRTH), and 342–364 (FACDICGRKFARSDERKRHTKIH). A disordered region spans residues 355–379 (DERKRHTKIHLRQKDKKADKATPVS). Basic residues predominate over residues 359-369 (RHTKIHLRQKD).

Belongs to the EGR C2H2-type zinc-finger protein family.

It is found in the nucleus. It localises to the cytoplasm. In terms of biological role, transcriptional regulator. Recognizes and binds to the DNA sequence 5'-GCG(T/G)GGGCG-3'(EGR-site) in the promoter region of target genes. Binds double-stranded target DNA, irrespective of the cytosine methylation status. Regulates the transcription of numerous target genes, and thereby plays an important role in regulating the response to growth factors, DNA damage, and ischemia. Plays a role in the regulation of cell survival, proliferation and cell death. Mediates responses to ischemia and hypoxia; regulates the expression of proteins that are involved in inflammatory processes. Plays a role in regulating the expression of circadian clock genes. This Xenopus laevis (African clawed frog) protein is Early growth response protein 1-B (egr1-b).